We begin with the raw amino-acid sequence, 350 residues long: 4-hydroxy-3-methylbut-2-en-1-yl diphosphate synthase (flavodoxin) (350 aa).

[4Fe-4S] cluster is bound by residues Cys-263, Cys-266, Cys-298, and Glu-305.

This sequence belongs to the IspG family. [4Fe-4S] cluster serves as cofactor.

It catalyses the reaction (2E)-4-hydroxy-3-methylbut-2-enyl diphosphate + oxidized [flavodoxin] + H2O + 2 H(+) = 2-C-methyl-D-erythritol 2,4-cyclic diphosphate + reduced [flavodoxin]. The protein operates within isoprenoid biosynthesis; isopentenyl diphosphate biosynthesis via DXP pathway; isopentenyl diphosphate from 1-deoxy-D-xylulose 5-phosphate: step 5/6. Functionally, converts 2C-methyl-D-erythritol 2,4-cyclodiphosphate (ME-2,4cPP) into 1-hydroxy-2-methyl-2-(E)-butenyl 4-diphosphate. This is 4-hydroxy-3-methylbut-2-en-1-yl diphosphate synthase (flavodoxin) from Nautilia profundicola (strain ATCC BAA-1463 / DSM 18972 / AmH).